The chain runs to 154 residues: MAPPAKVAKKPDGKAQALKVAKAVKSGVSTLQKKAKKIRTSVTFHRPKTLKKDRNPKYPRISAPPRNKLDHYQILKYPLTTESAMKKIEDNNTLVFIVDIRADKKKIKAAVKKMYDIQTKKVNTLIRPDGTKKAYVRLTPDYDALDIANKIGII.

Belongs to the universal ribosomal protein uL23 family.

This protein binds to a specific region on the 26S rRNA. The chain is Large ribosomal subunit protein uL23 (RPL23A) from Fritillaria agrestis (Stinkbells).